Here is a 75-residue protein sequence, read N- to C-terminus: Exodeoxyribonuclease 7 small subunit (75 aa).

It belongs to the XseB family. In terms of assembly, heterooligomer composed of large and small subunits.

The protein localises to the cytoplasm. It carries out the reaction Exonucleolytic cleavage in either 5'- to 3'- or 3'- to 5'-direction to yield nucleoside 5'-phosphates.. Bidirectionally degrades single-stranded DNA into large acid-insoluble oligonucleotides, which are then degraded further into small acid-soluble oligonucleotides. The chain is Exodeoxyribonuclease 7 small subunit from Geobacter sp. (strain M21).